A 298-amino-acid chain; its full sequence is Cytochrome c oxidase subunit 2 (298 aa).

The signal sequence occupies residues 1–29; sequence MMAIATKRRGVAAVMSLGVATMTAVPALA. Glutamine 30 bears the Pyrrolidone carboxylic acid mark. The Periplasmic portion of the chain corresponds to 30–55; sequence QDVLGDLPVIGKPVNGGMNFQPASSP. Residues 56–88 form a helical membrane-spanning segment; that stretch reads LAHDQQWLDHFVLYIITAVTIFVCLLLLICIVR. At 89–103 the chain is on the cytoplasmic side; it reads FNRRANPVPARFTHN. Residues 104–134 traverse the membrane as a helical segment; sequence TPIEVIWTLVPVLILVAIGAFSLPILFRSQE. Residues 135-280 are Periplasmic-facing; sequence MPNDPDLVIK…WLAGAKEEFA (146 aa). Residues histidine 210, cysteine 245, glutamate 247, cysteine 249, histidine 253, and methionine 256 each coordinate Cu cation. A propeptide spans 281 to 298 (C-terminal propeptide); it reads ADASDYLPASPVKLASAE.

Belongs to the cytochrome c oxidase subunit 2 family. The cofactor is binuclear copper center (CuA).

Its subcellular location is the cell inner membrane. The enzyme catalyses 4 Fe(II)-[cytochrome c] + O2 + 8 H(+)(in) = 4 Fe(III)-[cytochrome c] + 2 H2O + 4 H(+)(out). Its function is as follows. Subunits I and II form the functional core of the enzyme complex. Electrons originating in cytochrome c are transferred via heme a and Cu(A) to the binuclear center formed by heme a3 and Cu(B). This chain is Cytochrome c oxidase subunit 2 (ctaC), found in Paracoccus denitrificans.